Consider the following 279-residue polypeptide: Lyso-glycine lipid O-acyltransferase (279 aa).

Belongs to the O-acyltransferase GlsA family.

It carries out the reaction a lyso-glycine lipid + a fatty acyl-[ACP] = a glycine lipid + holo-[ACP]. The catalysed reaction is N-[(3R)-3-hydroxyhexadecanoyl]-glycine + hexadecanoyl-[ACP] = N-[(3R)-3-(hexadecanoyloxy)hexadecanoyl]-glycine + holo-[ACP]. It functions in the pathway lipid metabolism. Its function is as follows. Is involved in the production of glycine lipids (GL), which are phosphorus-free membrane lipids. Catalyzes the second step of GL biosynthesis, i.e. the O-acylation of the hydroxyl group of lyso-glycine lipids, resulting in the production of the mature diacylated glycine lipids. In Phocaeicola vulgatus (strain ATCC 8482 / DSM 1447 / JCM 5826 / CCUG 4940 / NBRC 14291 / NCTC 11154) (Bacteroides vulgatus), this protein is Lyso-glycine lipid O-acyltransferase.